We begin with the raw amino-acid sequence, 622 residues long: Low affinity potassium transport system protein Kup (622 aa).

Helical transmembrane passes span 9–29 (LPAI…TSPL), 49–69 (VFGF…IKYL), 103–123 (VIMG…TPAI), 137–157 (PQLD…LFMI), 165–185 (VGKL…VLGL), 213–233 (VSFI…ALYA), 247–267 (WFTV…ALLL), 276–296 (PFFL…AALA), 337–357 (IYIP…IVSF), 363–383 (LAAA…ILST), 396–416 (LVAL…SANL), and 419–439 (LLSG…IMTT).

Belongs to the HAK/KUP transporter (TC 2.A.72) family.

Its subcellular location is the cell inner membrane. It carries out the reaction K(+)(in) + H(+)(in) = K(+)(out) + H(+)(out). Its function is as follows. Responsible for the low-affinity transport of potassium into the cell. Likely operates as a K(+):H(+) symporter. This Salmonella arizonae (strain ATCC BAA-731 / CDC346-86 / RSK2980) protein is Low affinity potassium transport system protein Kup.